A 168-amino-acid chain; its full sequence is Fusaric acid resistance protein FusE (168 aa).

Functionally, involved in the resistance (detoxification) of the fungal toxin fusaric acid. This Burkholderia cepacia (Pseudomonas cepacia) protein is Fusaric acid resistance protein FusE (fusE).